The primary structure comprises 177 residues: MSRVAKAPVVIPAGVEVKLNGQEITIKGGKGELTRVLNDAVVVSQEDNTIVFGPREGVTNAWAQAGTARALVNNMVIGVNEGFTKKLILKGVGYRAAMKGNAVGLTLGFSHPVEHALPEGIKAECPTQTEIVVTGCDKQLVGQVAADLRSYRQPEPYKGKGVRYADEIVRTKEAKKK.

This sequence belongs to the universal ribosomal protein uL6 family. Part of the 50S ribosomal subunit.

This protein binds to the 23S rRNA, and is important in its secondary structure. It is located near the subunit interface in the base of the L7/L12 stalk, and near the tRNA binding site of the peptidyltransferase center. This chain is Large ribosomal subunit protein uL6, found in Aliivibrio fischeri (strain MJ11) (Vibrio fischeri).